Consider the following 372-residue polypeptide: Ligninase B (372 aa).

Positions 1-21 (MAFKQLFAAISLALSLSAANA) are cleaved as a signal peptide. Positions 22-28 (AAVIEKR) are excised as a propeptide. Disulfide bonds link Cys-31/Cys-43, Cys-42/Cys-313, Cys-62/Cys-148, and Cys-277/Cys-345. The active-site Proton acceptor is His-75. The Ca(2+) site is built by Asp-76, Gly-94, Asp-96, and Ser-98. His-204 serves as a coordination point for heme b. Residues Ser-205, Asp-222, Thr-224, Ile-227, and Asp-229 each coordinate Ca(2+). Asn-285 carries an N-linked (GlcNAc...) asparagine glycan. Residues 350–361 (FPTLTTLPGPET) are compositionally biased toward low complexity. Residues 350–372 (FPTLTTLPGPETSVQRIPPPPGA) form a disordered region.

The protein belongs to the peroxidase family. Ligninase subfamily. Heme b is required as a cofactor. The cofactor is Ca(2+).

It carries out the reaction 1-(3,4-dimethoxyphenyl)-2-(2-methoxyphenoxy)propane-1,3-diol + H2O2 = 3,4-dimethoxybenzaldehyde + guaiacol + glycolaldehyde + H2O. The catalysed reaction is 2 (3,4-dimethoxyphenyl)methanol + H2O2 = 2 (3,4-dimethoxyphenyl)methanol radical + 2 H2O. It functions in the pathway secondary metabolite metabolism; lignin degradation. Depolymerization of lignin. Catalyzes the C(alpha)-C(beta) cleavage of the propyl side chains of lignin. In Phanerodontia chrysosporium (White-rot fungus), this protein is Ligninase B (LIPB).